We begin with the raw amino-acid sequence, 100 residues long: Small ribosomal subunit protein uS14c (100 aa).

This sequence belongs to the universal ribosomal protein uS14 family. In terms of assembly, part of the 30S ribosomal subunit.

The protein resides in the plastid. Its subcellular location is the chloroplast. Its function is as follows. Binds 16S rRNA, required for the assembly of 30S particles. The sequence is that of Small ribosomal subunit protein uS14c from Phalaenopsis aphrodite subsp. formosana (Moth orchid).